The following is a 1250-amino-acid chain: DNA-directed RNA polymerase subunit beta'' (1250 aa).

Zn(2+)-binding residues include cysteine 224, cysteine 314, cysteine 321, and cysteine 324.

Belongs to the RNA polymerase beta' chain family. RpoC2 subfamily. In plastids the minimal PEP RNA polymerase catalytic core is composed of four subunits: alpha, beta, beta', and beta''. When a (nuclear-encoded) sigma factor is associated with the core the holoenzyme is formed, which can initiate transcription. The cofactor is Zn(2+).

It localises to the plastid. Its subcellular location is the chloroplast. It catalyses the reaction RNA(n) + a ribonucleoside 5'-triphosphate = RNA(n+1) + diphosphate. Functionally, DNA-dependent RNA polymerase catalyzes the transcription of DNA into RNA using the four ribonucleoside triphosphates as substrates. In Staurastrum punctulatum (Green alga), this protein is DNA-directed RNA polymerase subunit beta''.